Consider the following 315-residue polypeptide: Protoheme IX farnesyltransferase (315 aa).

9 consecutive transmembrane segments (helical) span residues 21–41 (YFALLKPRVMSLVVFTALVGL), 52–74 (VGFCAILFIAVGAGASGALNMWW), 98–118 (GEALALGLGLSGLSVVMLALA), 121–141 (LLAAGLLAFTIFFYAVVYSMW), 150–170 (IVIGGAAGAFPPMIGWVAATG), 177–197 (VLMFALIFMWTPPHFWALALF), 223–243 (ILVYTVLLVPVALGLALTPVA), 246–266 (LYLATALVLNAIFLKGAWDIW), and 284–304 (FFKFSLLYLALHFTALLAEAI).

Belongs to the UbiA prenyltransferase family. Protoheme IX farnesyltransferase subfamily. In terms of assembly, interacts with CtaA.

The protein resides in the cell inner membrane. It catalyses the reaction heme b + (2E,6E)-farnesyl diphosphate + H2O = Fe(II)-heme o + diphosphate. It participates in porphyrin-containing compound metabolism; heme O biosynthesis; heme O from protoheme: step 1/1. In terms of biological role, converts heme B (protoheme IX) to heme O by substitution of the vinyl group on carbon 2 of heme B porphyrin ring with a hydroxyethyl farnesyl side group. This Dinoroseobacter shibae (strain DSM 16493 / NCIMB 14021 / DFL 12) protein is Protoheme IX farnesyltransferase.